The chain runs to 817 residues: Leucine--tRNA ligase (817 aa).

Positions 42–52 (PYPSGKLHMGH) match the 'HIGH' region motif. Positions 576–580 (KMSKS) match the 'KMSKS' region motif. Lysine 579 provides a ligand contact to ATP.

Belongs to the class-I aminoacyl-tRNA synthetase family.

Its subcellular location is the cytoplasm. The catalysed reaction is tRNA(Leu) + L-leucine + ATP = L-leucyl-tRNA(Leu) + AMP + diphosphate. This is Leucine--tRNA ligase from Methylobacillus flagellatus (strain ATCC 51484 / DSM 6875 / VKM B-1610 / KT).